The sequence spans 448 residues: MSLDLLLRGAVLVTPEGERRADLGIVGGQIAELTDEIATPAAQTLDVSGLHVFPGVLDDHVHLNEPGRTHWEGFETGTQALAAGGATSFLDMPLNSSPPVLTRERFEDKARLGEEKSLIDFGLWGGLTPLNLDQLDDLAECGVIGLKAFMSHSGLDEFPAADDLTLYEGMRTAKRHGLVVATHAESNEFTRRLTETARAQGKSGVRDYLESRPVVTELEAVQRALLFAQDTGAALHLVHVSSGAAVALAYEGKQKGIDVTIETCPHYLHFTGEDVERVGAALKCAPPLRDPAVQEELWRELLAGHIDTVGSDHSPAPPDMKTSEDFFSLWGGISGAQSTLNVMLEDGYAQRGLPLEIIAALLALNPAQRFGLPQKGRLAVGADADFALVALGEKFTLDTLYDRWQQNPYRGQSFQGRVHATYLRGQPVYQNGEFTGTPRGRLLRPRSL.

6 residues coordinate Zn(2+): His-60, His-62, Lys-147, His-183, His-239, and Asp-312. Position 147 is an N6-carboxylysine (Lys-147).

It belongs to the metallo-dependent hydrolases superfamily. Allantoinase family. In terms of assembly, homotetramer. The cofactor is Zn(2+). In terms of processing, carboxylation allows a single lysine to coordinate two zinc ions.

It catalyses the reaction (S)-allantoin + H2O = allantoate + H(+). It functions in the pathway nitrogen metabolism; (S)-allantoin degradation; allantoate from (S)-allantoin: step 1/1. In terms of biological role, catalyzes the conversion of allantoin (5-ureidohydantoin) to allantoic acid by hydrolytic cleavage of the five-member hydantoin ring. The polypeptide is Allantoinase (Deinococcus radiodurans (strain ATCC 13939 / DSM 20539 / JCM 16871 / CCUG 27074 / LMG 4051 / NBRC 15346 / NCIMB 9279 / VKM B-1422 / R1)).